Reading from the N-terminus, the 210-residue chain is Large ribosomal subunit protein bL25 (210 aa).

The interval 1 to 23 (MSDIGTLSAKGRDRAGKGAARAT) is disordered.

The protein belongs to the bacterial ribosomal protein bL25 family. CTC subfamily. As to quaternary structure, part of the 50S ribosomal subunit; part of the 5S rRNA/L5/L18/L25 subcomplex. Contacts the 5S rRNA. Binds to the 5S rRNA independently of L5 and L18.

Its function is as follows. This is one of the proteins that binds to the 5S RNA in the ribosome where it forms part of the central protuberance. The protein is Large ribosomal subunit protein bL25 of Rhodospirillum rubrum (strain ATCC 11170 / ATH 1.1.1 / DSM 467 / LMG 4362 / NCIMB 8255 / S1).